A 286-amino-acid polypeptide reads, in one-letter code: Aldo-keto reductase MAV_4483 (286 aa).

Catalysis depends on Tyr61, which acts as the Proton donor. NADPH-binding residues include Leu201, Val203, Val239, Arg241, Ser242, Arg247, and Asn251.

This sequence belongs to the aldo/keto reductase family.

The polypeptide is Aldo-keto reductase MAV_4483 (Mycobacterium avium (strain 104)).